The primary structure comprises 882 residues: Translation initiation factor IF-2 (882 aa).

Residues 28–294 (GIRKSADDSV…SSLQQGFQKP (267 aa)) are disordered. A compositionally biased stretch (polar residues) spans 67–81 (STLNIPGTGGKSKSV). Over residues 92–209 (VKRDPQEAER…RMAEENKWTD (118 aa)) the composition is skewed to basic and acidic residues. A compositionally biased stretch (basic residues) spans 244 to 258 (GRGRNAKAARPKKGN). A compositionally biased stretch (basic and acidic residues) spans 259 to 272 (KHAESKADREEARA). The tr-type G domain occupies 381-550 (PRAPVVTIMG…LLQAEVLELK (170 aa)). The G1 stretch occupies residues 390–397 (GHVDHGKT). 390–397 (GHVDHGKT) contributes to the GTP binding site. Positions 415-419 (GITQH) are G2. The tract at residues 436 to 439 (DTPG) is G3. GTP contacts are provided by residues 436 to 440 (DTPGH) and 490 to 493 (NKID). The interval 490-493 (NKID) is G4. The tract at residues 526 to 528 (SAK) is G5. Lys-800 carries the N6-acetyllysine modification.

This sequence belongs to the TRAFAC class translation factor GTPase superfamily. Classic translation factor GTPase family. IF-2 subfamily.

Its subcellular location is the cytoplasm. Its function is as follows. One of the essential components for the initiation of protein synthesis. Protects formylmethionyl-tRNA from spontaneous hydrolysis and promotes its binding to the 30S ribosomal subunits. Also involved in the hydrolysis of GTP during the formation of the 70S ribosomal complex. The polypeptide is Translation initiation factor IF-2 (Shigella flexneri serotype 5b (strain 8401)).